The primary structure comprises 284 residues: 4-hydroxybenzoate octaprenyltransferase (284 aa).

9 consecutive transmembrane segments (helical) span residues 19-39 (IPILLILWPTLTALVLASHGL), 42-62 (ISYLVIFTIGVVVMRTVGCII), 85-105 (GQLSIKNAIWLCISLTLVAFI), 107-127 (VLFLNLYTILLSFVALFLAIL), 134-154 (FFAIPQLILGLAFNFGIFMAF), 165-185 (AWIFYLATICWTIAYDTIYAL), 211-231 (ILLFNFLSLLLLIILGIYCDF), 233-253 (SFFYLGVVICSLFFVRNYFLY), and 261-281 (CINAFSANHWIGLIIFIMAVI).

Belongs to the UbiA prenyltransferase family. It depends on Mg(2+) as a cofactor.

It is found in the cell inner membrane. The catalysed reaction is all-trans-octaprenyl diphosphate + 4-hydroxybenzoate = 4-hydroxy-3-(all-trans-octaprenyl)benzoate + diphosphate. Its pathway is cofactor biosynthesis; ubiquinone biosynthesis. Its function is as follows. Catalyzes the prenylation of para-hydroxybenzoate (PHB) with an all-trans polyprenyl group. Mediates the second step in the final reaction sequence of ubiquinone-8 (UQ-8) biosynthesis, which is the condensation of the polyisoprenoid side chain with PHB, generating the first membrane-bound Q intermediate 3-octaprenyl-4-hydroxybenzoate. In Francisella tularensis subsp. novicida (strain U112), this protein is 4-hydroxybenzoate octaprenyltransferase.